Consider the following 194-residue polypeptide: Protein A43 (194 aa).

Residues 1-22 form the signal peptide; sequence MMMMKWIISILTMSIMPVLAYS. The Extracellular portion of the chain corresponds to 23–165; that stretch reads SSIFRFHSED…YKDINDKYND (143 aa). N-linked (GlcNAc...) asparagine; by host glycans are attached at residues Asn-65 and Asn-114. Residues 166–186 traverse the membrane as a helical segment; it reads IYDFTAICMLIASTLIVTIYV. Topologically, residues 187-194 are cytoplasmic; sequence FKKIKMNS.

This sequence belongs to the orthopoxvirus OPG172 protein family.

It localises to the host membrane. It is found in the host cell surface. This chain is Protein A43 (OPG172), found in Homo sapiens (Human).